The sequence spans 87 residues: Large ribosomal subunit protein bL27 (87 aa).

Belongs to the bacterial ribosomal protein bL27 family.

This is Large ribosomal subunit protein bL27 from Phocaeicola vulgatus (strain ATCC 8482 / DSM 1447 / JCM 5826 / CCUG 4940 / NBRC 14291 / NCTC 11154) (Bacteroides vulgatus).